We begin with the raw amino-acid sequence, 239 residues long: MEIFPAIDLKEGRCVRLYQGEFSKETVMNEDPVAQAIIFETFGAKRLHIVDLDGAVAGESLNLSVIERICKAVRIPVQVGGGIRSLVSVEKLFSVGVDKVILGTAALYDKPFLEETVRLYKEKIIVGIDAKNGFVATRGWLDVSEISYIDLAKQMEKIGVQTIVFTDISKDGTLAGPNVEQLELLQKNVATRLIASGGIASIQDVKKLNDMNIYGVIIGKALYEKTIDLEEVLEVTKLC.

The active-site Proton acceptor is the D8. D129 functions as the Proton donor in the catalytic mechanism.

This sequence belongs to the HisA/HisF family.

The protein resides in the cytoplasm. It carries out the reaction 1-(5-phospho-beta-D-ribosyl)-5-[(5-phospho-beta-D-ribosylamino)methylideneamino]imidazole-4-carboxamide = 5-[(5-phospho-1-deoxy-D-ribulos-1-ylimino)methylamino]-1-(5-phospho-beta-D-ribosyl)imidazole-4-carboxamide. It participates in amino-acid biosynthesis; L-histidine biosynthesis; L-histidine from 5-phospho-alpha-D-ribose 1-diphosphate: step 4/9. This Bacillus cereus (strain AH187) protein is 1-(5-phosphoribosyl)-5-[(5-phosphoribosylamino)methylideneamino] imidazole-4-carboxamide isomerase.